Here is an 822-residue protein sequence, read N- to C-terminus: Telomere length regulation protein TEL2 homolog (822 aa).

Positions 442–504 (NDDEEEQPDA…ADQEKKKSAP (63 aa)) are disordered. The segment covering 465–477 (VSSQSVASDPGNG) has biased composition (polar residues). Positions 480-489 (SELDSDDDLT) are enriched in acidic residues.

Belongs to the TEL2 family.

It is found in the cytoplasm. The protein resides in the membrane. It localises to the nucleus. Its function is as follows. Regulator of the DNA damage response (DDR). Part of the TTT complex that is required to stabilize protein levels of the phosphatidylinositol 3-kinase-related protein kinase (PIKK) family proteins. Promotes assembly, stabilizes and maintains the activity of TORC complexes, which regulate cell growth and survival in response to nutrient and hormonal signals. May be involved in telomere length regulation. This chain is Telomere length regulation protein TEL2 homolog (telo2), found in Danio rerio (Zebrafish).